The chain runs to 25 residues: Omega-conotoxin MVIIB (25 aa).

3 disulfide bridges follow: cysteine 1–cysteine 16, cysteine 8–cysteine 20, and cysteine 15–cysteine 25. Cysteine 25 is modified (cysteine amide).

The protein belongs to the conotoxin O1 superfamily. As to expression, expressed by the venom duct.

It localises to the secreted. Omega-conotoxins act at presynaptic membranes, they bind and block voltage-gated calcium channels (Cav). This Conus magus (Magical cone) protein is Omega-conotoxin MVIIB.